Reading from the N-terminus, the 150-residue chain is Ribonuclease H (150 aa).

In terms of domain architecture, RNase H type-1 spans aspartate 3–aspartate 144. Mg(2+)-binding residues include aspartate 12, glutamate 50, aspartate 72, and aspartate 136. The disordered stretch occupies residues aspartate 129–lysine 150.

This sequence belongs to the RNase H family. As to quaternary structure, monomer. The cofactor is Mg(2+).

It is found in the cytoplasm. The catalysed reaction is Endonucleolytic cleavage to 5'-phosphomonoester.. Its function is as follows. Endonuclease that specifically degrades the RNA of RNA-DNA hybrids. In Hyphomonas neptunium (strain ATCC 15444), this protein is Ribonuclease H.